The chain runs to 363 residues: Heme A synthase (363 aa).

The next 8 helical transmembrane spans lie at A21 to G41, R107 to S127, L138 to S158, H174 to P194, L207 to G227, F268 to T288, A301 to M321, and V323 to A343. H270 is a binding site for heme. Residue H331 participates in heme binding.

Belongs to the COX15/CtaA family. Type 2 subfamily. Interacts with CtaB. Heme b serves as cofactor.

It localises to the cell membrane. It catalyses the reaction Fe(II)-heme o + 2 A + H2O = Fe(II)-heme a + 2 AH2. It participates in porphyrin-containing compound metabolism; heme A biosynthesis; heme A from heme O: step 1/1. Functionally, catalyzes the conversion of heme O to heme A by two successive hydroxylations of the methyl group at C8. The first hydroxylation forms heme I, the second hydroxylation results in an unstable dihydroxymethyl group, which spontaneously dehydrates, resulting in the formyl group of heme A. In Mesorhizobium japonicum (strain LMG 29417 / CECT 9101 / MAFF 303099) (Mesorhizobium loti (strain MAFF 303099)), this protein is Heme A synthase.